Consider the following 1155-residue polypeptide: RhoGEF domain-containing protein gxcJ (1155 aa).

Disordered regions lie at residues Glu114–Lys216, Leu259–Asn333, Leu429–Glu460, Leu484–Thr508, and Ser604–Gln639. 3 stretches are compositionally biased toward low complexity: residues Asn115–Asn153, Thr161–Asn211, and Asn260–Asn303. A coiled-coil region spans residues Asn192–Leu257. A compositionally biased stretch (polar residues) spans Tyr304 to Glu319. Positions Asn320–Ile330 are enriched in basic and acidic residues. Positions Phe441 to Asp457 are enriched in low complexity. Positions Ser604 to Asn637 are enriched in low complexity. The 175-residue stretch at His700–Gln874 folds into the DH domain. The tract at residues Ser1084–Thr1155 is disordered. Composition is skewed to low complexity over residues Ser1093–Asn1121 and Gln1128–Gln1137.

GTPase-activating protein. The sequence is that of RhoGEF domain-containing protein gxcJ (gxcJ) from Dictyostelium discoideum (Social amoeba).